Reading from the N-terminus, the 65-residue chain is Hirudin-3 (65 aa).

Positions 1 to 3 (VVY) are interaction with thrombin active site. Intrachain disulfides connect C6-C14, C16-C28, and C22-C39. The interval 39–65 (CVTGEGTPKPQSHNDGDFEEIPEEYLQ) is disordered. T45 carries O-linked (GalNAc...) threonine glycosylation. The tract at residues 55–65 (DFEEIPEEYLQ) is interaction with fibrinogen-binding exosite of thrombin. Over residues 55 to 65 (DFEEIPEEYLQ) the composition is skewed to acidic residues. A Sulfotyrosine modification is found at Y63.

It belongs to the protease inhibitor I14 (hirudin) family.

It is found in the secreted. Hirudin is a potent thrombin-specific protease inhibitor. It forms a stable non-covalent complex with alpha-thrombin, thereby abolishing its ability to cleave fibrinogen. The chain is Hirudin-3 from Hirudo medicinalis (Medicinal leech).